Here is a 227-residue protein sequence, read N- to C-terminus: Octanoyltransferase (227 aa).

A BPL/LPL catalytic domain is found at 31-209 (ANTIDEIWLV…VFLSLLGGTN (179 aa)). Substrate is bound by residues 71–78 (RGGKITYH), 139–141 (SIG), and 152–154 (GLA). The Acyl-thioester intermediate role is filled by cysteine 170.

Belongs to the LipB family.

Its subcellular location is the cytoplasm. It catalyses the reaction octanoyl-[ACP] + L-lysyl-[protein] = N(6)-octanoyl-L-lysyl-[protein] + holo-[ACP] + H(+). It functions in the pathway protein modification; protein lipoylation via endogenous pathway; protein N(6)-(lipoyl)lysine from octanoyl-[acyl-carrier-protein]: step 1/2. Its function is as follows. Catalyzes the transfer of endogenously produced octanoic acid from octanoyl-acyl-carrier-protein onto the lipoyl domains of lipoate-dependent enzymes. Lipoyl-ACP can also act as a substrate although octanoyl-ACP is likely to be the physiological substrate. This Baumannia cicadellinicola subsp. Homalodisca coagulata protein is Octanoyltransferase.